The primary structure comprises 772 residues: Bromo adjacent homology domain-containing 1 protein (772 aa).

2 disordered regions span residues 1–63 (MTHT…RSLV) and 77–117 (LENV…PRKR). Ser-8 carries the post-translational modification Phosphoserine. A compositionally biased stretch (basic residues) spans 49-61 (TGRRKNYPLRKRS). Ser-101 and Ser-121 each carry phosphoserine. Disordered stretches follow at residues 131–357 (LLER…PADY), 521–582 (QTVA…RTNG), and 723–743 (PSRK…PHRT). 3 stretches are compositionally biased toward basic and acidic residues: residues 147-158 (RGGDPHRSRDRA), 170-182 (RLGD…RDLS), and 189-199 (EGARRDGDPAP). Residue Ser-182 is modified to Phosphoserine. Residue Ser-204 is modified to Phosphoserine. Residues 280-289 (SAPPHGPPTQ) show a composition bias toward pro residues. Residues 299–310 (LENPLRPNLPLL) show a composition bias toward low complexity. Pro residues predominate over residues 340–352 (FPAPQLSPLPMPG). A compositionally biased stretch (polar residues) spans 536 to 548 (GSKSGLRTGSSCR). A compositionally biased stretch (basic residues) spans 549–580 (HTVRSKAARRPSHPKQPRAQRPRPRRRRRRRT). Thr-580 is modified (phosphothreonine). A BAH domain is found at 616-771 (ETIRVRDTVL…FRHGRILKNP (156 aa)).

In terms of assembly, interacts with CBX5 (HP1 alpha), HDAC5, MBD1 and SP1. In terms of processing, ubiquitinated in a FBXO11-dependent manner; leading to degradation.

The protein resides in the nucleus. It is found in the chromosome. Heterochromatin protein that acts as a transcription repressor and has the ability to promote the formation of large heterochromatic domains. May act by recruiting heterochromatin proteins such as CBX5 (HP1 alpha), HDAC5 and MBD1. Represses IGF2 expression by binding to its CpG-rich P3 promoter and recruiting heterochromatin proteins. The protein is Bromo adjacent homology domain-containing 1 protein (Bahd1) of Mus musculus (Mouse).